The chain runs to 769 residues: Serine/threonine-protein kinase PLK4 (769 aa).

The Protein kinase domain occupies 14 to 267 (YEVQHLLGKG…LEAVLCHPFM (254 aa)). Residues 20-28 (LGKGGFATV) and Lys-43 contribute to the ATP site. Catalysis depends on Asp-138, which acts as the Proton acceptor. Positions 381–498 (EDRISVPPLN…ARFVGLVKSK (118 aa)) constitute a Cryptic POLO box 1 (CPB1) domain. Residues 499–602 (TPKVTYFSTL…GRRPITDVQP (104 aa)) enclose the Cryptic POLO box 2 (CPB2) domain. The POLO box domain occupies 660–739 (PIKRINVPEI…IPNIQLKLKT (80 aa)).

This sequence belongs to the protein kinase superfamily. Ser/Thr protein kinase family. CDC5/Polo subfamily. Homodimer. Interacts with Alms1a. Post-translationally, ubiquitinated by the SCF-slmb ubiquitin ligase complex; leading to its degradation by the proteasome during interphase and regulating centriole number and ensuring the block to centriole reduplication. Expressed in testis (at protein level).

It localises to the cytoplasm. The protein resides in the cytoskeleton. It is found in the microtubule organizing center. Its subcellular location is the centrosome. The protein localises to the centriole. The catalysed reaction is L-seryl-[protein] + ATP = O-phospho-L-seryl-[protein] + ADP + H(+). It carries out the reaction L-threonyl-[protein] + ATP = O-phospho-L-threonyl-[protein] + ADP + H(+). Serine/threonine-protein kinase that plays a central role in centriole duplication. Able to trigger procentriole formation on the surface of the mother centriole cylinder, using mother centriole as a platform, leading to the recruitment of centriole biogenesis proteins such as Sas-6. When overexpressed, it is able to induce centrosome amplification through the simultaneous generation of multiple procentrioles adjoining each parental centriole during S phase. Centrosome amplification following overexpression can initiate tumorigenesis, highlighting the importance of centrosome regulation in cancers. In Drosophila melanogaster (Fruit fly), this protein is Serine/threonine-protein kinase PLK4 (SAK).